A 123-amino-acid polypeptide reads, in one-letter code: NADH-quinone oxidoreductase subunit A (123 aa).

3 helical membrane-spanning segments follow: residues 11–31 (FPVL…VSIG), 67–87 (LVAI…PWGV), and 92–112 (IGWP…LGFA).

The protein belongs to the complex I subunit 3 family. As to quaternary structure, NDH-1 is composed of 14 different subunits. Subunits NuoA, H, J, K, L, M, N constitute the membrane sector of the complex.

The protein resides in the cell inner membrane. The catalysed reaction is a quinone + NADH + 5 H(+)(in) = a quinol + NAD(+) + 4 H(+)(out). Functionally, NDH-1 shuttles electrons from NADH, via FMN and iron-sulfur (Fe-S) centers, to quinones in the respiratory chain. The immediate electron acceptor for the enzyme in this species is believed to be ubiquinone. Couples the redox reaction to proton translocation (for every two electrons transferred, four hydrogen ions are translocated across the cytoplasmic membrane), and thus conserves the redox energy in a proton gradient. This chain is NADH-quinone oxidoreductase subunit A, found in Paraburkholderia phymatum (strain DSM 17167 / CIP 108236 / LMG 21445 / STM815) (Burkholderia phymatum).